The following is a 478-amino-acid chain: MAADGLPVRVLPTLDPSEGHTFLEPSKRINEGDDVSEFLCSKAYVDIMTFLLQLNRSMFPAKLPDGRVQTWPLNTEAVGFSAPVRQLQQLLSKIEDLLDATPLMPGEWRYANGAFQVWHDKVKKATPSLLAECLPAEILHAPSSDPNGPTAEVELTEYFLGSWGSRERMDYGTGHELSFLTFLGAIWKLNGFPKNEPGVEERTIVLGVIEPYLELIRAVIKKYKLEPAGSHGVWGLDDHSFIPYIFGSAQLGPAISNSDLVPETGSLPDAVDPDGVTKANVVEKERKVNMYFSAIGFINDVKKGPFWEHSQMLYNISGVQAGWAKINKGMIKMYNAEVLSKFPVVQHFRFGSLFSWNRDPSAIPPPSRIHTSSGPETRPRQVPPSARQDPGPGTKAPWATASQSTPPPSTGTAAPWATSRAGREPPTTSRIPSALPDTSRLPPGPMAPTRAPWASSQPAGPAPTGDPNDITTKAPWAK.

The segment at 359-478 (DPSAIPPPSR…DITTKAPWAK (120 aa)) is disordered. Low complexity predominate over residues 396 to 419 (APWATASQSTPPPSTGTAAPWATS).

It belongs to the PTPA-type PPIase family.

The protein localises to the cytoplasm. It localises to the nucleus. It catalyses the reaction [protein]-peptidylproline (omega=180) = [protein]-peptidylproline (omega=0). Its function is as follows. PPIases accelerate the folding of proteins. It catalyzes the cis-trans isomerization of proline imidic peptide bonds in oligopeptides. Acts as a regulatory subunit for PP2A-like phosphatases modulating their activity or substrate specificity, probably by inducing a conformational change in the catalytic subunit, a direct target of the PPIase. Can reactivate inactive phosphatase PP2A-phosphatase methylesterase complexes (PP2Ai) in presence of ATP and Mg(2+) by dissociating the inactive form from the complex. The protein is Serine/threonine-protein phosphatase 2A activator 1 (rrd1) of Aspergillus oryzae (strain ATCC 42149 / RIB 40) (Yellow koji mold).